A 157-amino-acid polypeptide reads, in one-letter code: Phosphopantetheine adenylyltransferase (157 aa).

T10 lines the substrate pocket. Residues T10–F11 and H18 contribute to the ATP site. Residues K42, L74, and R88 each coordinate substrate. ATP is bound by residues G89 to R91, E99, and N124 to S130.

Belongs to the bacterial CoaD family. Homohexamer. Mg(2+) serves as cofactor.

Its subcellular location is the cytoplasm. It carries out the reaction (R)-4'-phosphopantetheine + ATP + H(+) = 3'-dephospho-CoA + diphosphate. It participates in cofactor biosynthesis; coenzyme A biosynthesis; CoA from (R)-pantothenate: step 4/5. Its function is as follows. Reversibly transfers an adenylyl group from ATP to 4'-phosphopantetheine, yielding dephospho-CoA (dPCoA) and pyrophosphate. The sequence is that of Phosphopantetheine adenylyltransferase from Helicobacter pylori (strain P12).